A 131-amino-acid polypeptide reads, in one-letter code: Small ribosomal subunit protein eS17A (131 aa).

It belongs to the eukaryotic ribosomal protein eS17 family. As to quaternary structure, component of the small ribosomal subunit (SSU). Mature yeast ribosomes consist of a small (40S) and a large (60S) subunit. The 40S small subunit contains 1 molecule of ribosomal RNA (18S rRNA) and at least 33 different proteins. The large 60S subunit contains 3 rRNA molecules (25S, 5.8S and 5S rRNA) and at least 46 different proteins.

It is found in the cytoplasm. In terms of biological role, component of the ribosome, a large ribonucleoprotein complex responsible for the synthesis of proteins in the cell. The small ribosomal subunit (SSU) binds messenger RNAs (mRNAs) and translates the encoded message by selecting cognate aminoacyl-transfer RNA (tRNA) molecules. The large subunit (LSU) contains the ribosomal catalytic site termed the peptidyl transferase center (PTC), which catalyzes the formation of peptide bonds, thereby polymerizing the amino acids delivered by tRNAs into a polypeptide chain. The nascent polypeptides leave the ribosome through a tunnel in the LSU and interact with protein factors that function in enzymatic processing, targeting, and the membrane insertion of nascent chains at the exit of the ribosomal tunnel. The polypeptide is Small ribosomal subunit protein eS17A (rps1701) (Schizosaccharomyces pombe (strain 972 / ATCC 24843) (Fission yeast)).